Reading from the N-terminus, the 1164-residue chain is IgA FC receptor (1164 aa).

Positions 1–37 (MFKSNYERKMRYSIRKFSVGVASVAVASLFMGSVAHA) are cleaved as a signal peptide. Disordered stretches follow at residues 54–75 (KPYPSMAQTDQGNNSSSSELET) and 167–220 (HEEV…EDKD). Residues 59-73 (MAQTDQGNNSSSSEL) are compositionally biased toward polar residues. 2 stretches are compositionally biased toward basic and acidic residues: residues 167–176 (HEEVEKDKKA) and 183–220 (KQSDTKVDLSNIDKELNHQKSQVEKMAEQKGITNEDKD). IgA-binding regions lie at residues 199-438 (NHQK…KIEL) and 439-826 (TVSP…ETNT). The Ig-like domain maps to 434–534 (QKIELTVSPE…VEKTFTITVQ (101 aa)). Over residues 536 to 564 (KEEKQVPKTPEQKDSKTEEKVPQEPKSND) the composition is skewed to basic and acidic residues. Disordered stretches follow at residues 536-567 (KEEKQVPKTPEQKDSKTEEKVPQEPKSNDKNQ) and 823-947 (ETNT…PDGL). Residues 911-920 (PKIPEPPKTP) show a composition bias toward pro residues. Residues 1132-1136 (LPYTG) carry the LPXTG sorting signal motif. Thr-1135 is modified (pentaglycyl murein peptidoglycan amidated threonine). Residues 1136 to 1164 (GVASNLVLEIMGLLGLIGTSFIAMKRRKS) constitute a propeptide, removed by sortase.

The protein resides in the secreted. Its subcellular location is the cell wall. This chain is IgA FC receptor (bag), found in Streptococcus agalactiae.